Here is a 360-residue protein sequence, read N- to C-terminus: Sorbitol dehydrogenase (360 aa).

Cys42 is a Zn(2+) binding site. Tyr48 contacts substrate. The Zn(2+) site is built by His67 and Glu68. Residue Glu153 participates in substrate binding. Residues Asp201, Arg206, 277-279 (AGN), and 301-303 (SFR) contribute to the NAD(+) site. Positions 303 and 304 each coordinate substrate.

Belongs to the zinc-containing alcohol dehydrogenase family. In terms of assembly, homotetramer. Zn(2+) is required as a cofactor.

The enzyme catalyses keto-D-fructose + NADH + H(+) = D-sorbitol + NAD(+). Functionally, polyol dehydrogenase that catalyzes the reversible NAD(+)-dependent oxidation of various sugar alcohols. Is active with D-sorbitol (D-glucitol) as substrate, leading to the C2-oxidized product D-fructose. Suppresses growth arrest induced by a p53 tumor mutant in fission yeast. In Schizosaccharomyces pombe (strain 972 / ATCC 24843) (Fission yeast), this protein is Sorbitol dehydrogenase (tms1).